We begin with the raw amino-acid sequence, 335 residues long: Beta-1,4-mannooligosaccharide phosphorylase (335 aa).

This sequence belongs to the glycosyl hydrolase 130 family. Homohexamer in solution.

The catalysed reaction is [(1-&gt;4)-beta-D-mannosyl](n) + phosphate = [(1-&gt;4)-beta-D-mannosyl](n-1) + alpha-D-mannose 1-phosphate. Functionally, catalyzes the phosphorolysis of beta-1,4-mannooligosaccharides to mannose 1-phosphate (Man1P) and shorter mannooligosaccharides. Can also catalyze the phosphorolysis of 4-O-beta-D-mannopyranosyl-D-glucopyranose (Man-Glc), but shows higher activity toward longer mannooligosaccharides. Involved in a mannan catabolic pathway which feeds into glycolysis. The chain is Beta-1,4-mannooligosaccharide phosphorylase from Ruminococcus albus (strain ATCC 27210 / DSM 20455 / JCM 14654 / NCDO 2250 / 7).